Consider the following 485-residue polypeptide: Glycogen synthase (485 aa).

Position 20 (Lys20) interacts with ADP-alpha-D-glucose.

Belongs to the glycosyltransferase 1 family. Bacterial/plant glycogen synthase subfamily.

The enzyme catalyses [(1-&gt;4)-alpha-D-glucosyl](n) + ADP-alpha-D-glucose = [(1-&gt;4)-alpha-D-glucosyl](n+1) + ADP + H(+). It participates in glycan biosynthesis; glycogen biosynthesis. Synthesizes alpha-1,4-glucan chains using ADP-glucose. This chain is Glycogen synthase, found in Vibrio vulnificus (strain YJ016).